The following is a 142-amino-acid chain: Peptide methionine sulfoxide reductase MsrB (142 aa).

One can recognise a MsrB domain in the interval 3 to 126; it reads KEELKKKLSP…NSAALRFIPF (124 aa). The Nucleophile role is filled by Cys115.

It belongs to the MsrB Met sulfoxide reductase family.

The catalysed reaction is L-methionyl-[protein] + [thioredoxin]-disulfide + H2O = L-methionyl-(R)-S-oxide-[protein] + [thioredoxin]-dithiol. The sequence is that of Peptide methionine sulfoxide reductase MsrB from Lactococcus lactis subsp. cremoris (strain MG1363).